The sequence spans 497 residues: Cytochrome P450 26A1 (497 aa).

C442 provides a ligand contact to heme.

This sequence belongs to the cytochrome P450 family. It depends on heme as a cofactor.

The protein localises to the endoplasmic reticulum membrane. Its subcellular location is the microsome membrane. The catalysed reaction is all-trans-retinoate + reduced [NADPH--hemoprotein reductase] + O2 = all-trans-(4S)-hydroxyretinoate + oxidized [NADPH--hemoprotein reductase] + H2O + H(+). It carries out the reaction all-trans-(4S)-hydroxyretinoate + reduced [NADPH--hemoprotein reductase] + O2 = all-trans-(4S,16)-dihydroxyretinoate + oxidized [NADPH--hemoprotein reductase] + H2O + H(+). The enzyme catalyses all-trans-retinoate + reduced [NADPH--hemoprotein reductase] + O2 = all-trans-18-hydroxyretinoate + oxidized [NADPH--hemoprotein reductase] + H2O + H(+). A cytochrome P450 monooxygenase involved in the metabolism of retinoates (RAs), the active metabolites of vitamin A, and critical signaling molecules in animals. RAs exist as at least four different isomers: all-trans-RA (atRA), 9-cis-RA, 13-cis-RA, and 9,13-dicis-RA, where atRA is considered to be the biologically active isomer, although 9-cis-RA and 13-cis-RA also have activity. Catalyzes the hydroxylation of atRA primarily at C-4 and C-18, thereby contributing to the regulation of atRA homeostasis and signaling. Hydroxylation of atRA limits its biological activity and initiates a degradative process leading to its eventual elimination. Involved in the convertion of atRA to all-trans-4-oxo-RA. Able to metabolize other RAs such as 9-cis, 13-cis and 9,13-di-cis RA. Can oxidize all-trans-13,14-dihydroretinoate (DRA) to metabolites which could include all-trans-4-oxo-DRA, all-trans-4-hydroxy-DRA, all-trans-5,8-epoxy-DRA, and all-trans-18-hydroxy-DRA. May play a role in the oxidative metabolism of xenobiotics such as tazarotenic acid. The chain is Cytochrome P450 26A1 from Mus musculus (Mouse).